A 148-amino-acid chain; its full sequence is Flagellar assembly factor FliW (148 aa).

It belongs to the FliW family. In terms of assembly, interacts with translational regulator CsrA and flagellin(s).

It localises to the cytoplasm. In terms of biological role, acts as an anti-CsrA protein, binds CsrA and prevents it from repressing translation of its target genes, one of which is flagellin. Binds to flagellin and participates in the assembly of the flagellum. This chain is Flagellar assembly factor FliW, found in Ruminiclostridium cellulolyticum (strain ATCC 35319 / DSM 5812 / JCM 6584 / H10) (Clostridium cellulolyticum).